Consider the following 219-residue polypeptide: 7-cyano-7-deazaguanine synthase (219 aa).

10–20 is an ATP binding site; that stretch reads FSGGQDSTTCL. Zn(2+) is bound by residues Cys-188, Cys-197, Cys-200, and Cys-203.

The protein belongs to the QueC family. Homodimer. Requires Zn(2+) as cofactor.

It catalyses the reaction 7-carboxy-7-deazaguanine + NH4(+) + ATP = 7-cyano-7-deazaguanine + ADP + phosphate + H2O + H(+). It functions in the pathway purine metabolism; 7-cyano-7-deazaguanine biosynthesis. Functionally, catalyzes the ATP-dependent conversion of 7-carboxy-7-deazaguanine (CDG) to 7-cyano-7-deazaguanine (preQ(0)). The chain is 7-cyano-7-deazaguanine synthase from Clostridium botulinum (strain Kyoto / Type A2).